Consider the following 130-residue polypeptide: UPF0713 protein YngL (130 aa).

Transmembrane regions (helical) follow at residues Leu-4–Phe-25, Met-62–Leu-84, and Ile-89–Gly-111.

The protein belongs to the UPF0713 family.

It is found in the cell membrane. In Bacillus subtilis (strain 168), this protein is UPF0713 protein YngL (yngL).